The chain runs to 245 residues: Protein canopy homolog 4 (245 aa).

The N-terminal stretch at 1 to 27 (MCGLRFIMGPVRLEILLFILAAYGAWA) is a signal peptide. Intrachain disulfides connect cysteine 44–cysteine 202, cysteine 47–cysteine 190, and cysteine 100–cysteine 162. Residues 207–245 (WTGKEKISDGQEEADDEEEEEEEEITKTSGNPKHDPEDL) form a disordered region. Positions 209–237 (GKEKISDGQEEADDEEEEEEEEITKTSGN) form a coiled coil. Positions 216 to 230 (GQEEADDEEEEEEEE) are enriched in acidic residues.

Belongs to the canopy family. As to quaternary structure, interacts with TLR4. As to expression, highly expressed in lung, spleen, thymus, and uterus. Moderately expressed in kidney, stomach and placenta. Weakly expressed in brain, heart, liver, small intestine, skeletal muscle and testis.

It localises to the secreted. Plays a role in the regulation of the cell surface expression of TLR4. The sequence is that of Protein canopy homolog 4 (Cnpy4) from Mus musculus (Mouse).